The primary structure comprises 313 residues: Putative S-adenosyl-L-methionine-dependent methyltransferase MAV_4573 (313 aa).

S-adenosyl-L-methionine contacts are provided by residues Asp-129 and 158-159; that span reads DL.

The protein belongs to the UPF0677 family.

Exhibits S-adenosyl-L-methionine-dependent methyltransferase activity. The chain is Putative S-adenosyl-L-methionine-dependent methyltransferase MAV_4573 from Mycobacterium avium (strain 104).